Consider the following 267-residue polypeptide: MRPADLIRQKQNGRTITILTAWDSLSAALVEAAGADAVLVGDSLAMVALGHATTLPVTLDQMRHHTLAVSRGFAAAPSKQPLLICDLPFLSYQCGADLAVQAAGTLLKETPAAAVKLEGAEAEVLAVIDRLVRMGIPVMGHLGLTPQAVHRLGYRRQAEDPVSQERLLTQAIALEQAGCFALVLEHVPSALAREVRRRLLIPVIGIGAGDDCDGQIRVTADLLGLTEQQPPFSPALIPGQQLFVEALRTWIAAQTPTTTPPPATPDY.

The Mg(2+) site is built by aspartate 42 and aspartate 86. 3-methyl-2-oxobutanoate contacts are provided by residues 42-43, aspartate 86, and lysine 116; that span reads DS. Mg(2+) is bound at residue glutamate 118. The Proton acceptor role is filled by glutamate 185.

It belongs to the PanB family. As to quaternary structure, homodecamer; pentamer of dimers. It depends on Mg(2+) as a cofactor.

It localises to the cytoplasm. It catalyses the reaction 3-methyl-2-oxobutanoate + (6R)-5,10-methylene-5,6,7,8-tetrahydrofolate + H2O = 2-dehydropantoate + (6S)-5,6,7,8-tetrahydrofolate. Its pathway is cofactor biosynthesis; (R)-pantothenate biosynthesis; (R)-pantoate from 3-methyl-2-oxobutanoate: step 1/2. Catalyzes the reversible reaction in which hydroxymethyl group from 5,10-methylenetetrahydrofolate is transferred onto alpha-ketoisovalerate to form ketopantoate. In Parasynechococcus marenigrum (strain WH8102), this protein is 3-methyl-2-oxobutanoate hydroxymethyltransferase.